The chain runs to 1070 residues: Probable arabinosyltransferase C (1070 aa).

12 helical membrane passes run 10–32 (IARL…TPFL), 210–232 (LLKT…ALHL), 247–269 (SRWW…WHFV), 399–421 (VATS…LFSG), 425–442 (IASI…LTIL), 449–471 (FGAV…LIFR), 512–534 (SVAR…AMSL), 547–564 (SRRI…MMFT), 574–596 (VFAG…AALR), 603–625 (VFAA…WWYV), 645–664 (TALL…FHFV), and 685–707 (SPIA…MAMI).

This sequence belongs to the emb family.

It localises to the cell membrane. Functionally, arabinosyl transferase responsible for the polymerization of arabinose into the arabinan of arabinogalactan. The protein is Probable arabinosyltransferase C (embC) of Mycobacterium leprae (strain TN).